The primary structure comprises 990 residues: A-type ATP synthase subunit B (990 aa).

Residues 491 to 614 (VAGLIASDGS…LQLLLKRLGV (124 aa)) form the DOD-type homing endonuclease domain.

Belongs to the ATPase alpha/beta chains family. As to quaternary structure, has multiple subunits with at least A(3), B(3), C, D, E, F, H, I and proteolipid K(x). In terms of processing, this protein undergoes a protein self splicing that involves a post-translational excision of the VDE intervening region (intein) followed by peptide ligation.

The protein resides in the cell membrane. In terms of biological role, component of the A-type ATP synthase that produces ATP from ADP in the presence of a proton gradient across the membrane. The B chain is a regulatory subunit. In Methanopyrus kandleri (strain AV19 / DSM 6324 / JCM 9639 / NBRC 100938), this protein is A-type ATP synthase subunit B.